Here is a 482-residue protein sequence, read N- to C-terminus: Early growth response protein 4 (482 aa).

The disordered stretch occupies residues 274–357 (DLGEGAESLP…PPAKARRKGR (84 aa)). The segment covering 280-290 (ESLPGLLTPPS) has biased composition (low complexity). The segment covering 291–302 (GEGGSSGEGGEF) has biased composition (gly residues). Positions 337-349 (PEPPVPPPAPFPP) are enriched in pro residues. 3 consecutive C2H2-type zinc fingers follow at residues 376 to 400 (FACP…LRIH), 406 to 428 (FQCR…VRTH), and 434 to 456 (FACD…SKVH).

Belongs to the EGR C2H2-type zinc-finger protein family. Expressed in brain. In the cerebellum and frontal cortex.

The protein localises to the nucleus. Functionally, transcriptional regulator. Recognizes and binds to the DNA sequence 5'-GCGGGGGCG-3' (GSG). Activates the transcription of target genes whose products are required for mitogenesis and differentiation. In Bos taurus (Bovine), this protein is Early growth response protein 4 (EGR4).